The sequence spans 209 residues: tRNA(Phe) 7-((3-amino-3-carboxypropyl)-4-demethylwyosine(37)-N(4))-methyltransferase (209 aa).

This sequence belongs to the TYW3 family.

It carries out the reaction 4-demethyl-7-[(3S)-3-amino-3-carboxypropyl]wyosine(37) in tRNA(Phe) + S-adenosyl-L-methionine = 7-[(3S)-3-amino-3-carboxypropyl]wyosine(37) in tRNA(Phe) + S-adenosyl-L-homocysteine + H(+). In terms of biological role, S-adenosyl-L-methionine-dependent methyltransferase that acts as a component of the wyosine derivatives biosynthesis pathway. Probably methylates N-4 position of wybutosine-86 to produce wybutosine-72. The sequence is that of tRNA(Phe) 7-((3-amino-3-carboxypropyl)-4-demethylwyosine(37)-N(4))-methyltransferase from Saccharolobus solfataricus (strain ATCC 35092 / DSM 1617 / JCM 11322 / P2) (Sulfolobus solfataricus).